Here is a 341-residue protein sequence, read N- to C-terminus: Phosphoribosylformylglycinamidine cyclo-ligase (341 aa).

It belongs to the AIR synthase family.

It localises to the cytoplasm. The catalysed reaction is 2-formamido-N(1)-(5-O-phospho-beta-D-ribosyl)acetamidine + ATP = 5-amino-1-(5-phospho-beta-D-ribosyl)imidazole + ADP + phosphate + H(+). Its pathway is purine metabolism; IMP biosynthesis via de novo pathway; 5-amino-1-(5-phospho-D-ribosyl)imidazole from N(2)-formyl-N(1)-(5-phospho-D-ribosyl)glycinamide: step 2/2. The protein is Phosphoribosylformylglycinamidine cyclo-ligase of Lachnospira eligens (strain ATCC 27750 / DSM 3376 / VPI C15-48 / C15-B4) (Eubacterium eligens).